Here is a 243-residue protein sequence, read N- to C-terminus: NAD-dependent protein deacetylase (243 aa).

One can recognise a Deacetylase sirtuin-type domain in the interval 1 to 243 (MRNDLETLKH…VSVVKSLMTE (243 aa)). Residues alanine 24, phenylalanine 35, arginine 36, glutamine 105, isoleucine 107, aspartate 108, and histidine 123 each coordinate NAD(+). Residue phenylalanine 35 coordinates nicotinamide. The nicotinamide site is built by isoleucine 107 and aspartate 108. Histidine 123 acts as the Proton acceptor in catalysis. Residues cysteine 131, cysteine 134, cysteine 151, and cysteine 154 each contribute to the Zn(2+) site. Residues serine 192, serine 193, asparagine 215, and aspartate 232 each contribute to the NAD(+) site.

The protein belongs to the sirtuin family. Class U subfamily. Zn(2+) serves as cofactor.

The protein localises to the cytoplasm. The enzyme catalyses N(6)-acetyl-L-lysyl-[protein] + NAD(+) + H2O = 2''-O-acetyl-ADP-D-ribose + nicotinamide + L-lysyl-[protein]. NAD-dependent protein deacetylase which modulates the activities of several enzymes which are inactive in their acetylated form. In Staphylococcus aureus (strain MSSA476), this protein is NAD-dependent protein deacetylase.